The primary structure comprises 414 residues: DNA primase small subunit PriS (414 aa).

Residues aspartate 98, aspartate 100, and aspartate 312 contribute to the active site.

The protein belongs to the eukaryotic-type primase small subunit family. As to quaternary structure, heterodimer of a small subunit (PriS) and a large subunit (PriL). It depends on Mg(2+) as a cofactor. Mn(2+) serves as cofactor.

Functionally, catalytic subunit of DNA primase, an RNA polymerase that catalyzes the synthesis of short RNA molecules used as primers for DNA polymerase during DNA replication. The small subunit contains the primase catalytic core and has DNA synthesis activity on its own. Binding to the large subunit stabilizes and modulates the activity, increasing the rate of DNA synthesis while decreasing the length of the DNA fragments, and conferring RNA synthesis capability. The DNA polymerase activity may enable DNA primase to also catalyze primer extension after primer synthesis. May also play a role in DNA repair. The sequence is that of DNA primase small subunit PriS from Methanosarcina acetivorans (strain ATCC 35395 / DSM 2834 / JCM 12185 / C2A).